Reading from the N-terminus, the 132-residue chain is Protein LEKR1 (132 aa).

The stretch at 37–116 (FKAMEEKVKA…KKQLSHLQDE (80 aa)) forms a coiled coil.

The protein is Protein LEKR1 (LEKR1) of Homo sapiens (Human).